Consider the following 785-residue polypeptide: MARTSSKTDSPKTGRLSGRFWKLLGASTDKDQARSMAQVHKAAEFDAKAADLDDEQLRKAARLLELDDLADSTDVPQFLAIAREAAKRTTGLTPFDVQLQGALRMLAGDVVEMATGEGKTLSGAIAAAGYALAGRNVHVITINDYLARRDAEWMGPLIEAMGLTIGWITADSTAAERRAAYRCDITYASVNEIGFDVLRDQLVTDVDDLVSPNPDVALIDEADSVLVDEALVPLVLAGTSHRETPRLELIRLVGELDENTDFATDNDSRNVHLTEAGARKIEAALGGIDLYSEEHVATTLTEVNVALHAHVLLQRDVHYIVRDDAVHLINSSRGRIATLQRWPDGLQAAVEAKEGIETTETGEVLDTITVQALINRYPRVCGMTGTALAAGEQLRQFYKLGVSPIPPNKPNIRQDETDRVYVTIAAKNDAVIEHIAEVHETGQPVLVGTRDVAESEEIHRRLVKAGVPAVVLNAKNDAEEAAVIAEAGKLGAVTVSTQMAGRGTDIRLGGSDEEDHDRVAELGGLHVIGTGRHHTERLDNQLRGRAGRQGDPGSSVFFSSWEDDLVMSHLEDNKLPLECDETGRVISPKAATLLEHAQRVAEGRLLDVHANTWRYNQLIAQQRAILVERRNTLLRTTTARDEIAELVPERYEEVKARLTAKDSETGEAKLETICRLIMLYHLDRAWADHLAFLADIRESIHLRALGRQNPLDEFHRMAVDAFASLAADAIEAAQQTFETAPSIEDEPGVDLSKLARPTSTWTYMVHDNPLADDTLSALSLPGVFR.

ATP is bound by residues Q98, 116–120 (GEGKT), and D505.

It belongs to the SecA family. Monomer and homodimer. Part of the essential Sec protein translocation apparatus which comprises SecA, SecYEG and auxiliary proteins SecDF. Other proteins may also be involved.

The protein localises to the cell membrane. It is found in the cytoplasm. The catalysed reaction is ATP + H2O + cellular proteinSide 1 = ADP + phosphate + cellular proteinSide 2.. In terms of biological role, part of the Sec protein translocase complex. Interacts with the SecYEG preprotein conducting channel. Has a central role in coupling the hydrolysis of ATP to the transfer of proteins into and across the cell membrane, serving as an ATP-driven molecular motor driving the stepwise translocation of polypeptide chains across the membrane. The polypeptide is Protein translocase subunit SecA 3 (Mycolicibacterium vanbaalenii (strain DSM 7251 / JCM 13017 / BCRC 16820 / KCTC 9966 / NRRL B-24157 / PYR-1) (Mycobacterium vanbaalenii)).